Consider the following 450-residue polypeptide: Flavin-containing monooxygenase FMO GS-OX-like 3 (450 aa).

17–22 (GAGPAG) is a binding site for FAD. 215-220 (GNSSSA) lines the NADP(+) pocket.

The protein belongs to the FMO family. FAD serves as cofactor.

In terms of biological role, catalyzes the conversion of methylthioalkyl glucosinolates of any chain length into methylsulfinylalkyl glucosinolates. This Arabidopsis thaliana (Mouse-ear cress) protein is Flavin-containing monooxygenase FMO GS-OX-like 3.